The primary structure comprises 430 residues: Gamma-glutamyl phosphate reductase (430 aa).

This sequence belongs to the gamma-glutamyl phosphate reductase family.

The protein resides in the cytoplasm. It carries out the reaction L-glutamate 5-semialdehyde + phosphate + NADP(+) = L-glutamyl 5-phosphate + NADPH + H(+). It functions in the pathway amino-acid biosynthesis; L-proline biosynthesis; L-glutamate 5-semialdehyde from L-glutamate: step 2/2. Catalyzes the NADPH-dependent reduction of L-glutamate 5-phosphate into L-glutamate 5-semialdehyde and phosphate. The product spontaneously undergoes cyclization to form 1-pyrroline-5-carboxylate. The protein is Gamma-glutamyl phosphate reductase of Rhodopseudomonas palustris (strain TIE-1).